A 327-amino-acid polypeptide reads, in one-letter code: Zinc finger C2HC domain-containing protein 1A (327 aa).

The C2HC/C3H-type 1 zinc-finger motif lies at 13–42 (ELVPCKICGRSFFPKVLKKHVPICQKTAAK). Residues Cys17, Cys20, His32, and Cys36 each coordinate Zn(2+). 2 disordered regions span residues 40–96 (AAKR…KHEE) and 108–131 (NQVI…DYIQ). The segment covering 46-56 (VFDSGRQRAEG) has biased composition (basic and acidic residues). The segment covering 63 to 76 (KPIKPKLQSSSSSS) has biased composition (low complexity). Positions 116-125 (PLPPPPPPSY) are enriched in pro residues. The C2HC/C3H-type 2 zinc finger occupies 128–157 (DYIQCPYCQRRFGENAADRHIKFCKEQASR). Positions 132, 135, 147, and 151 each coordinate Zn(2+). A disordered region spans residues 154–271 (QASRISNKSK…NPSTGIGMNK (118 aa)). The segment covering 187–199 (NSPTASSVSSRLP) has biased composition (polar residues). Over residues 211–229 (GIPSSKPSSTGSIKSTPSG) the composition is skewed to low complexity. Polar residues-rich tracts occupy residues 233–245 (LRNN…SPPS) and 255–267 (VSQS…STGI).

It belongs to the ZC2HC1 family. Zn(2+) is required as a cofactor.

The polypeptide is Zinc finger C2HC domain-containing protein 1A (zc2hc1a) (Danio rerio (Zebrafish)).